A 419-amino-acid chain; its full sequence is Tyrosine--tRNA ligase (419 aa).

Tyr-34 is an L-tyrosine binding site. A 'HIGH' region motif is present at residues Pro-39–His-48. The L-tyrosine site is built by Tyr-169 and Gln-173. Positions Lys-229 to Ser-233 match the 'KMSKS' region motif. Position 232 (Lys-232) interacts with ATP. The region spanning Leu-352–Lys-419 is the S4 RNA-binding domain.

Belongs to the class-I aminoacyl-tRNA synthetase family. TyrS type 1 subfamily. Homodimer.

It localises to the cytoplasm. It carries out the reaction tRNA(Tyr) + L-tyrosine + ATP = L-tyrosyl-tRNA(Tyr) + AMP + diphosphate + H(+). Its function is as follows. Catalyzes the attachment of tyrosine to tRNA(Tyr) in a two-step reaction: tyrosine is first activated by ATP to form Tyr-AMP and then transferred to the acceptor end of tRNA(Tyr). This chain is Tyrosine--tRNA ligase, found in Streptococcus agalactiae serotype Ia (strain ATCC 27591 / A909 / CDC SS700).